A 91-amino-acid chain; its full sequence is Hepcidin-1 (91 aa).

The signal sequence occupies residues 1 to 24; it reads MKLSNVFLAAVVILTCVCVFQITA. A propeptide spanning residues 25-64 is cleaved from the precursor; the sequence is VPFIQQVQDEHHVESEELQENQHLTEAEHRQTDPLVLFRT. 4 disulfide bridges follow: Cys73–Cys89, Cys76–Cys79, Cys77–Cys85, and Cys80–Cys88.

This sequence belongs to the hepcidin family.

Its subcellular location is the secreted. Functionally, seems to act as a signaling molecule involved in the maintenance of iron homeostasis. Seems to be required in conjunction with HFE to regulate both intestinal iron absorption and iron storage in macrophages. May also have antimicrobial activity. The sequence is that of Hepcidin-1 (hamp1) from Danio rerio (Zebrafish).